A 379-amino-acid chain; its full sequence is L-lactate dehydrogenase (379 aa).

In terms of domain architecture, FMN hydroxy acid dehydrogenase spans 1–379; it reads MIISASTDYR…LSRDSLVKIP (379 aa). Substrate is bound at residue tyrosine 24. Residues serine 106 and glutamine 127 each coordinate FMN. Tyrosine 129 is a substrate binding site. Threonine 155 contacts FMN. Residue arginine 164 participates in substrate binding. Residue lysine 251 coordinates FMN. The active-site Proton acceptor is the histidine 275. Residue arginine 278 coordinates substrate. Residue 306-330 coordinates FMN; it reads DSGIRTGLDVVRMLALGADCTLLGR.

It belongs to the FMN-dependent alpha-hydroxy acid dehydrogenase family. FMN serves as cofactor.

Its subcellular location is the cell inner membrane. The catalysed reaction is (S)-lactate + A = pyruvate + AH2. Catalyzes the conversion of L-lactate to pyruvate. Is coupled to the respiratory chain. In Vibrio parahaemolyticus serotype O3:K6 (strain RIMD 2210633), this protein is L-lactate dehydrogenase.